The chain runs to 387 residues: Galactokinase (387 aa).

33 to 36 (EHID) contributes to the substrate binding site. Residues serine 67 and 124–130 (GAGLSSS) each bind ATP. Serine 130 and glutamate 162 together coordinate Mg(2+). Aspartate 174 acts as the Proton acceptor in catalysis. Residue tyrosine 224 coordinates substrate.

The protein belongs to the GHMP kinase family. GalK subfamily.

Its subcellular location is the cytoplasm. It carries out the reaction alpha-D-galactose + ATP = alpha-D-galactose 1-phosphate + ADP + H(+). Its pathway is carbohydrate metabolism; galactose metabolism. In terms of biological role, catalyzes the transfer of the gamma-phosphate of ATP to D-galactose to form alpha-D-galactose-1-phosphate (Gal-1-P). In Clostridium perfringens (strain SM101 / Type A), this protein is Galactokinase.